A 243-amino-acid polypeptide reads, in one-letter code: 1-(5-phosphoribosyl)-5-[(5-phosphoribosylamino)methylideneamino] imidazole-4-carboxamide isomerase (243 aa).

The active-site Proton acceptor is Asp-8. Asp-129 acts as the Proton donor in catalysis.

It belongs to the HisA/HisF family.

It localises to the cytoplasm. It catalyses the reaction 1-(5-phospho-beta-D-ribosyl)-5-[(5-phospho-beta-D-ribosylamino)methylideneamino]imidazole-4-carboxamide = 5-[(5-phospho-1-deoxy-D-ribulos-1-ylimino)methylamino]-1-(5-phospho-beta-D-ribosyl)imidazole-4-carboxamide. It participates in amino-acid biosynthesis; L-histidine biosynthesis; L-histidine from 5-phospho-alpha-D-ribose 1-diphosphate: step 4/9. The polypeptide is 1-(5-phosphoribosyl)-5-[(5-phosphoribosylamino)methylideneamino] imidazole-4-carboxamide isomerase (Azorhizobium caulinodans (strain ATCC 43989 / DSM 5975 / JCM 20966 / LMG 6465 / NBRC 14845 / NCIMB 13405 / ORS 571)).